The sequence spans 162 residues: UPF0114 protein Pput_0713 (162 aa).

4 consecutive transmembrane segments (helical) span residues 15–35, 53–73, 109–126, and 136–156; these read LLAP…LKFF, LILV…LVMV, VAAS…RVFM, and LMWY…MGYL.

It belongs to the UPF0114 family.

It is found in the cell membrane. The protein is UPF0114 protein Pput_0713 of Pseudomonas putida (strain ATCC 700007 / DSM 6899 / JCM 31910 / BCRC 17059 / LMG 24140 / F1).